A 201-amino-acid polypeptide reads, in one-letter code: Peptidyl-tRNA hydrolase (201 aa).

Residue Y14 coordinates tRNA. The Proton acceptor role is filled by H19. Residues Y64, N66, and N112 each contribute to the tRNA site.

This sequence belongs to the PTH family. Monomer.

It localises to the cytoplasm. It catalyses the reaction an N-acyl-L-alpha-aminoacyl-tRNA + H2O = an N-acyl-L-amino acid + a tRNA + H(+). Hydrolyzes ribosome-free peptidyl-tRNAs (with 1 or more amino acids incorporated), which drop off the ribosome during protein synthesis, or as a result of ribosome stalling. In terms of biological role, catalyzes the release of premature peptidyl moieties from peptidyl-tRNA molecules trapped in stalled 50S ribosomal subunits, and thus maintains levels of free tRNAs and 50S ribosomes. The polypeptide is Peptidyl-tRNA hydrolase (Bradyrhizobium diazoefficiens (strain JCM 10833 / BCRC 13528 / IAM 13628 / NBRC 14792 / USDA 110)).